We begin with the raw amino-acid sequence, 218 residues long: Ribonuclease HII (218 aa).

The RNase H type-2 domain occupies 12-206; that stretch reads GRVAGVDEVG…VREALARSAL (195 aa). D18, E19, and D115 together coordinate a divalent metal cation.

It belongs to the RNase HII family. Mn(2+) is required as a cofactor. The cofactor is Mg(2+).

Its subcellular location is the cytoplasm. It catalyses the reaction Endonucleolytic cleavage to 5'-phosphomonoester.. Its function is as follows. Endonuclease that specifically degrades the RNA of RNA-DNA hybrids. In Rhodospirillum rubrum (strain ATCC 11170 / ATH 1.1.1 / DSM 467 / LMG 4362 / NCIMB 8255 / S1), this protein is Ribonuclease HII.